A 116-amino-acid chain; its full sequence is CDKN2AIP N-terminal-like protein (116 aa).

The residue at position 1 (M1) is an N-acetylmethionine. In terms of domain architecture, XRN2-binding (XTBD) spans 24-116 (AEQFRSYSES…RSELMKKHQS (93 aa)).

This sequence belongs to the CARF family. Interacts with XRN2; the interaction is direct.

The polypeptide is CDKN2AIP N-terminal-like protein (CDKN2AIPNL) (Homo sapiens (Human)).